Reading from the N-terminus, the 410-residue chain is MAPFSPASSDVLVIGGGPSGTALSAELAARGLDVQQLAPHPPRPFPATYGAWLGDLPTWARGCAEQVWTDVRAYTGPQPTSLGQPYALLDNAALLRTLRGLADWTWVEGAALHAERSGAGWTVYGAGGERWQTRLVVDASGHGALVSPVRFPGGAALQTAYGVVARFRRPPVTPGSMVWMDYRTPAPELKRGEATFLYAMHLGGDRYFVEETSLIARPAPTRAELRRRLLARLSAQGTPPHATESEEWVAFPMNAQAPAPGGVLAYGAAAGRVHPVSGFQVAGALSDAPGVATAIATALCQGKDAAAAGWAALWSPERRAAREVHLLGVGALLGLERAELPHFFGTFFGLPREQWARFLHPDTDAGTLARTMLRVFAQTGGRVRLPLARAALAQPAASGRALAAAAGLKI.

An NAD(+)-binding site is contributed by 11-39 (VLVIGGGPSGTALSAELAARGLDVQQLAP).

This sequence belongs to the lycopene cyclase family.

This is an uncharacterized protein from Deinococcus radiodurans (strain ATCC 13939 / DSM 20539 / JCM 16871 / CCUG 27074 / LMG 4051 / NBRC 15346 / NCIMB 9279 / VKM B-1422 / R1).